Here is a 420-residue protein sequence, read N- to C-terminus: Tyrosine--tRNA ligase (420 aa).

Tyr38 lines the L-tyrosine pocket. The 'HIGH' region motif lies at 43–52; the sequence is PTGDSLHIGH. L-tyrosine-binding residues include Tyr169 and Gln173. The short motif at 231–235 is the 'KMSKS' region element; that stretch reads KFGKS. Lys234 contributes to the ATP binding site. One can recognise an S4 RNA-binding domain in the interval 353–419; that stretch reads KNLVDFLVDT…GKRKYTLVTI (67 aa).

It belongs to the class-I aminoacyl-tRNA synthetase family. TyrS type 1 subfamily. As to quaternary structure, homodimer.

Its subcellular location is the cytoplasm. It catalyses the reaction tRNA(Tyr) + L-tyrosine + ATP = L-tyrosyl-tRNA(Tyr) + AMP + diphosphate + H(+). In terms of biological role, catalyzes the attachment of tyrosine to tRNA(Tyr) in a two-step reaction: tyrosine is first activated by ATP to form Tyr-AMP and then transferred to the acceptor end of tRNA(Tyr). In Lactobacillus helveticus (strain DPC 4571), this protein is Tyrosine--tRNA ligase.